Here is a 546-residue protein sequence, read N- to C-terminus: Chaperonin GroEL (546 aa).

ATP-binding positions include 30–33, K51, 87–91, G415, 479–481, and D495; these read TLGP, DGTTT, and NAA. The segment at 526-546 is disordered; sequence KKDEPAMPAGGGMGGMGGMDF. Positions 534-546 are enriched in gly residues; it reads AGGGMGGMGGMDF.

The protein belongs to the chaperonin (HSP60) family. Forms a cylinder of 14 subunits composed of two heptameric rings stacked back-to-back. Interacts with the co-chaperonin GroES.

It is found in the cytoplasm. It catalyses the reaction ATP + H2O + a folded polypeptide = ADP + phosphate + an unfolded polypeptide.. Functionally, together with its co-chaperonin GroES, plays an essential role in assisting protein folding. The GroEL-GroES system forms a nano-cage that allows encapsulation of the non-native substrate proteins and provides a physical environment optimized to promote and accelerate protein folding. The sequence is that of Chaperonin GroEL from Xanthomonas oryzae pv. oryzae (strain MAFF 311018).